A 78-amino-acid chain; its full sequence is Acyl carrier protein (78 aa).

A Carrier domain is found at 2-77; the sequence is SDIEQRVKKI…QAIDYVNANL (76 aa). At S37 the chain carries O-(pantetheine 4'-phosphoryl)serine.

It belongs to the acyl carrier protein (ACP) family. 4'-phosphopantetheine is transferred from CoA to a specific serine of apo-ACP by AcpS. This modification is essential for activity because fatty acids are bound in thioester linkage to the sulfhydryl of the prosthetic group.

The protein localises to the cytoplasm. It functions in the pathway lipid metabolism; fatty acid biosynthesis. Functionally, carrier of the growing fatty acid chain in fatty acid biosynthesis. This is Acyl carrier protein from Methylobacillus flagellatus (strain ATCC 51484 / DSM 6875 / VKM B-1610 / KT).